A 229-amino-acid chain; its full sequence is Uracil-DNA glycosylase (229 aa).

D64 serves as the catalytic Proton acceptor.

This sequence belongs to the uracil-DNA glycosylase (UDG) superfamily. UNG family.

Its subcellular location is the cytoplasm. The catalysed reaction is Hydrolyzes single-stranded DNA or mismatched double-stranded DNA and polynucleotides, releasing free uracil.. Its function is as follows. Excises uracil residues from the DNA which can arise as a result of misincorporation of dUMP residues by DNA polymerase or due to deamination of cytosine. This is Uracil-DNA glycosylase from Klebsiella pneumoniae (strain 342).